Here is a 502-residue protein sequence, read N- to C-terminus: ATP synthase subunit alpha (502 aa).

169 to 176 (GDRQTGKT) is an ATP binding site.

The protein belongs to the ATPase alpha/beta chains family. In terms of assembly, F-type ATPases have 2 components, CF(1) - the catalytic core - and CF(0) - the membrane proton channel. CF(1) has five subunits: alpha(3), beta(3), gamma(1), delta(1), epsilon(1). CF(0) has three main subunits: a(1), b(2) and c(9-12). The alpha and beta chains form an alternating ring which encloses part of the gamma chain. CF(1) is attached to CF(0) by a central stalk formed by the gamma and epsilon chains, while a peripheral stalk is formed by the delta and b chains.

Its subcellular location is the cell membrane. It carries out the reaction ATP + H2O + 4 H(+)(in) = ADP + phosphate + 5 H(+)(out). Its function is as follows. Produces ATP from ADP in the presence of a proton gradient across the membrane. The alpha chain is a regulatory subunit. The polypeptide is ATP synthase subunit alpha (Staphylococcus aureus (strain COL)).